Consider the following 577-residue polypeptide: 9-cis-epoxycarotenoid dioxygenase NCED6, chloroplastic (577 aa).

Positions 1-25 (MQHSLRSDLLPTKTSPRSHLLPQPK) are disordered. 4 residues coordinate Fe cation: histidine 276, histidine 325, histidine 390, and histidine 563.

Belongs to the carotenoid oxygenase family. It depends on Fe(2+) as a cofactor. In terms of tissue distribution, expressed before fertilization in male and female gametophytes, and then immediately after pollination, restricted to seed endosperm.

Its subcellular location is the plastid. It localises to the chloroplast stroma. It catalyses the reaction a 9-cis-epoxycarotenoid + O2 = a 12'-apo-carotenal + 2-cis,4-trans-xanthoxin. The enzyme catalyses 9-cis-violaxanthin + O2 = (3S,5R,6S)-5,6-epoxy-3-hydroxy-5,6-dihydro-12'-apo-beta-caroten-12'-al + 2-cis,4-trans-xanthoxin. It carries out the reaction 9'-cis-neoxanthin + O2 = (3S,5R,6R)-3,5-dihydroxy-6,7-didehydro-5,6-dihydro-12'-apo-beta-caroten-12'-al + 2-cis,4-trans-xanthoxin. In terms of biological role, has a 11,12(11',12') 9-cis epoxycarotenoid cleavage activity. Catalyzes the first step of abscisic-acid biosynthesis from carotenoids. Contributes probably to abscisic acid synthesis for the induction of seed dormancy. This chain is 9-cis-epoxycarotenoid dioxygenase NCED6, chloroplastic (NCED6), found in Arabidopsis thaliana (Mouse-ear cress).